The chain runs to 278 residues: Short-chain dehydrogenase/reductase eupG (278 aa).

Residues leucine 19, aspartate 71, and asparagine 98 each coordinate NADP(+). Catalysis depends on serine 155, which acts as the Proton donor. NADP(+)-binding residues include tyrosine 188, lysine 192, and threonine 223. Tyrosine 188 (proton acceptor) is an active-site residue. The Lowers pKa of active site Tyr role is filled by lysine 192.

It belongs to the short-chain dehydrogenases/reductases (SDR) family.

The protein operates within secondary metabolite biosynthesis; terpenoid biosynthesis. Short-chain dehydrogenase/reductase; part of the gene cluster that mediates the biosynthesis of eupenifeldin, a bistropolone meroterpenoid that acts as an antitumor agent. The first step of eupenifeldin biosynthesis is the biosynthesis of 3-methylorcinaldehyde performed by the non-reducing polyketide synthase eupA. Oxidative dearomatization of 3-methylorcinaldehyde likely catalyzed by the FAD-dependent monooxygenase eupB is followed by oxidative ring expansion by the 2-oxoglutarate-dependent dioxygenase eupC to provide the first tropolone metabolite, tropolone stipitaldehyde. In parallel, generation of sesquiterpene alpha-humulene from farnesylpyrophosphate (FPP) is catalyzed by the terpene cyclase eupE. The cytochrome P450 monooxygenase eupD then hydroxylates humulene to humulenol. The putative Diels-Alderase eupF probably catalyzes the formation of the tropolone-humulene skeleton by linking humulenol and the polyketide moiety. The short-chain dehydrogenase/reductase eupG and the flavin-dependent monooxygenase eupH are also essential for eupenifeldin biosynthesis and are likely the additional decorating enzymes of the tropolone-humulene skeleton to produce final eupenifeldin or derivatives. This chain is Short-chain dehydrogenase/reductase eupG, found in Phoma sp.